A 437-amino-acid chain; its full sequence is Protein farnesyltransferase subunit beta (437 aa).

PFTB repeat units follow at residues 123-164 (ATDV…CIIG), 174-215 (REKL…SLTN), 222-263 (FEGT…VILK), 270-312 (LKSL…PLLH), and 332-374 (QQAL…SIAQ). (2E,6E)-farnesyl diphosphate contacts are provided by residues 248-251 (HGGY) and 291-294 (RCNK). Zn(2+) is bound by residues aspartate 297 and cysteine 299. 300 to 303 (YSFW) contacts (2E,6E)-farnesyl diphosphate. Histidine 362 lines the Zn(2+) pocket. Serine 432 carries the phosphoserine modification. Position 436 is a phosphothreonine (threonine 436).

It belongs to the protein prenyltransferase subunit beta family. In terms of assembly, heterodimer of FNTA and FNTB. Requires Zn(2+) as cofactor.

It carries out the reaction L-cysteinyl-[protein] + (2E,6E)-farnesyl diphosphate = S-(2E,6E)-farnesyl-L-cysteinyl-[protein] + diphosphate. Functionally, essential subunit of the farnesyltransferase complex. Catalyzes the transfer of a farnesyl moiety from farnesyl diphosphate to a cysteine at the fourth position from the C-terminus of several proteins having the C-terminal sequence Cys-aliphatic-aliphatic-X. The sequence is that of Protein farnesyltransferase subunit beta (Fntb) from Rattus norvegicus (Rat).